We begin with the raw amino-acid sequence, 243 residues long: Urease accessory protein UreF (243 aa).

This sequence belongs to the UreF family. As to quaternary structure, ureD, UreF and UreG form a complex that acts as a GTP-hydrolysis-dependent molecular chaperone, activating the urease apoprotein by helping to assemble the nickel containing metallocenter of UreC. The UreE protein probably delivers the nickel.

The protein localises to the cytoplasm. Its function is as follows. Required for maturation of urease via the functional incorporation of the urease nickel metallocenter. The polypeptide is Urease accessory protein UreF (Rhodopseudomonas palustris (strain BisB5)).